The following is a 247-amino-acid chain: 1-(5-phosphoribosyl)-5-[(5-phosphoribosylamino)methylideneamino] imidazole-4-carboxamide isomerase (247 aa).

The active-site Proton acceptor is the D8. D130 functions as the Proton donor in the catalytic mechanism.

Belongs to the HisA/HisF family.

It is found in the cytoplasm. It catalyses the reaction 1-(5-phospho-beta-D-ribosyl)-5-[(5-phospho-beta-D-ribosylamino)methylideneamino]imidazole-4-carboxamide = 5-[(5-phospho-1-deoxy-D-ribulos-1-ylimino)methylamino]-1-(5-phospho-beta-D-ribosyl)imidazole-4-carboxamide. The protein operates within amino-acid biosynthesis; L-histidine biosynthesis; L-histidine from 5-phospho-alpha-D-ribose 1-diphosphate: step 4/9. The sequence is that of 1-(5-phosphoribosyl)-5-[(5-phosphoribosylamino)methylideneamino] imidazole-4-carboxamide isomerase from Leptospira biflexa serovar Patoc (strain Patoc 1 / Ames).